The chain runs to 879 residues: DNA mismatch repair protein MutS (879 aa).

Residue 629 to 636 (GPNMAGKS) coordinates ATP. The disordered stretch occupies residues 824–845 (VGGQPQKELSEHKPHQPSLFAP).

It belongs to the DNA mismatch repair MutS family.

Functionally, this protein is involved in the repair of mismatches in DNA. It is possible that it carries out the mismatch recognition step. This protein has a weak ATPase activity. The polypeptide is DNA mismatch repair protein MutS (Desulfotalea psychrophila (strain LSv54 / DSM 12343)).